We begin with the raw amino-acid sequence, 501 residues long: Aerobic glycerol-3-phosphate dehydrogenase (501 aa).

5-33 contacts FAD; sequence DLIVIGGGINGAGIAADAAGRGLSVLMLE.

Belongs to the FAD-dependent glycerol-3-phosphate dehydrogenase family. FAD serves as cofactor.

The protein localises to the cytoplasm. It catalyses the reaction a quinone + sn-glycerol 3-phosphate = dihydroxyacetone phosphate + a quinol. The protein operates within polyol metabolism; glycerol degradation via glycerol kinase pathway; glycerone phosphate from sn-glycerol 3-phosphate (aerobic route): step 1/1. Conversion of glycerol 3-phosphate to dihydroxyacetone. Uses molecular oxygen or nitrate as electron acceptor. The polypeptide is Aerobic glycerol-3-phosphate dehydrogenase (glpD) (Escherichia coli (strain K12)).